The chain runs to 53 residues: MIKWIIILLIVAAAASLLGMPALAGAAATGARILIGIVLVIFLLVVLGIFAVT.

2 helical membrane passes run 4–24 (WIII…PALA) and 33–53 (ILIG…FAVT).

Belongs to the UPF0391 family.

Its subcellular location is the cell membrane. The chain is UPF0391 membrane protein msr4317 from Mesorhizobium japonicum (strain LMG 29417 / CECT 9101 / MAFF 303099) (Mesorhizobium loti (strain MAFF 303099)).